A 463-amino-acid polypeptide reads, in one-letter code: Kynureninase 2 (463 aa).

Residues Leu-134, Thr-135, 162–165, Asp-247, His-250, and Tyr-272 each bind pyridoxal 5'-phosphate; that span reads FPSD. The residue at position 273 (Lys-273) is an N6-(pyridoxal phosphate)lysine. Trp-312 and Asn-340 together coordinate pyridoxal 5'-phosphate.

This sequence belongs to the kynureninase family. In terms of assembly, homodimer. It depends on pyridoxal 5'-phosphate as a cofactor.

It is found in the cytoplasm. It carries out the reaction L-kynurenine + H2O = anthranilate + L-alanine + H(+). The catalysed reaction is 3-hydroxy-L-kynurenine + H2O = 3-hydroxyanthranilate + L-alanine + H(+). It functions in the pathway amino-acid degradation; L-kynurenine degradation; L-alanine and anthranilate from L-kynurenine: step 1/1. It participates in cofactor biosynthesis; NAD(+) biosynthesis; quinolinate from L-kynurenine: step 2/3. In terms of biological role, catalyzes the cleavage of L-kynurenine (L-Kyn) and L-3-hydroxykynurenine (L-3OHKyn) into anthranilic acid (AA) and 3-hydroxyanthranilic acid (3-OHAA), respectively. This chain is Kynureninase 2 (bna5-2), found in Aspergillus niger (strain ATCC MYA-4892 / CBS 513.88 / FGSC A1513).